A 419-amino-acid chain; its full sequence is Protein phosphatase methylesterase 1 (419 aa).

Basic residues predominate over residues 1 to 12 (MSQLHRGMHKKP). The tract at residues 1 to 75 (MSQLHRGMHK…KSAASPTVPA (75 aa)) is disordered. A compositionally biased stretch (acidic residues) spans 32 to 52 (TETEETVECTEEEEEQDETDG). Catalysis depends on residues Ser-230, Asp-256, and His-383.

The protein belongs to the AB hydrolase superfamily.

It carries out the reaction [phosphatase 2A protein]-C-terminal L-leucine methyl ester + H2O = [phosphatase 2A protein]-C-terminal L-leucine + methanol + H(+). In terms of biological role, demethylates proteins that have been reversibly carboxymethylated. Demethylates the phosphatase PP2A catalytic subunit. This chain is Protein phosphatase methylesterase 1 (PPE1), found in Yarrowia lipolytica (strain CLIB 122 / E 150) (Yeast).